Reading from the N-terminus, the 394-residue chain is Phosphoglycerate kinase (394 aa).

Substrate is bound by residues 21–23 (DFN), Arg36, 59–62 (HLGR), Arg118, and Arg151. Ser183 is modified (phosphoserine). ATP contacts are provided by Lys201 and Gly292. The residue at position 299 (Thr299) is a Phosphothreonine. Residues Glu323 and 350 to 353 (GGDS) contribute to the ATP site.

It belongs to the phosphoglycerate kinase family. As to quaternary structure, monomer.

It localises to the cytoplasm. It catalyses the reaction (2R)-3-phosphoglycerate + ATP = (2R)-3-phospho-glyceroyl phosphate + ADP. Its pathway is carbohydrate degradation; glycolysis; pyruvate from D-glyceraldehyde 3-phosphate: step 2/5. This is Phosphoglycerate kinase (pgk) from Priestia megaterium (strain DSM 319 / IMG 1521) (Bacillus megaterium).